The sequence spans 395 residues: ATP phosphoribosyltransferase regulatory subunit (395 aa).

Belongs to the class-II aminoacyl-tRNA synthetase family. HisZ subfamily. In terms of assembly, heteromultimer composed of HisG and HisZ subunits.

The protein localises to the cytoplasm. It participates in amino-acid biosynthesis; L-histidine biosynthesis; L-histidine from 5-phospho-alpha-D-ribose 1-diphosphate: step 1/9. In terms of biological role, required for the first step of histidine biosynthesis. May allow the feedback regulation of ATP phosphoribosyltransferase activity by histidine. The chain is ATP phosphoribosyltransferase regulatory subunit from Azotobacter vinelandii (strain DJ / ATCC BAA-1303).